Here is a 520-residue protein sequence, read N- to C-terminus: GMP synthase [glutamine-hydrolyzing] (520 aa).

Positions 3 to 200 (AIAIIDFGSQ…FLDIANCKRD (198 aa)) constitute a Glutamine amidotransferase type-1 domain. Cysteine 84 (nucleophile) is an active-site residue. Residues histidine 175 and glutamate 177 contribute to the active site. Positions 201-386 (WTMKSIIEKQ…IGLSNEIIFQ (186 aa)) constitute a GMPS ATP-PPase domain. Position 228–234 (228–234 (SGGVDSS)) interacts with ATP.

As to quaternary structure, homodimer.

The enzyme catalyses XMP + L-glutamine + ATP + H2O = GMP + L-glutamate + AMP + diphosphate + 2 H(+). It functions in the pathway purine metabolism; GMP biosynthesis; GMP from XMP (L-Gln route): step 1/1. Its function is as follows. Catalyzes the synthesis of GMP from XMP. In Wolbachia sp. subsp. Brugia malayi (strain TRS), this protein is GMP synthase [glutamine-hydrolyzing].